A 129-amino-acid chain; its full sequence is Sm-like protein LSM4 (129 aa).

The Sm domain maps to 2–75 (LPLSLLKTAQ…IKYLRVPDEV (74 aa)). The segment covering 79 to 90 (VQEEKTRTDRKP) has biased composition (basic and acidic residues). Residues 79–129 (VQEEKTRTDRKPPGVGRGRGRGVDDGGARGRGRGTSMGKMGGNRGAGRGRG) are disordered. Gly residues predominate over residues 111–129 (RGTSMGKMGGNRGAGRGRG).

The protein belongs to the snRNP Sm proteins family. As to quaternary structure, component of the heptameric LSM1-LSM7 complex that forms a seven-membered ring structure with a donut shape. The LSM subunits are arranged in the order LSM1, LSM2, LSM3, LSM6, LSM5, LSM7 and LSM4. LSM4 subunit interacts only with its two neighboring subunits, LSM1A or LSM1B and LSM7. Component of the heptameric LSM2-LSM8 complex that forms a seven-membered ring structure with a donut shape. The LSM subunits are arranged in the order LSM8, LSM2, LSM3, LSM6, LSM5, LSM7 and LSM4. LSM4 subunit interacts only with its two neighboring subunits, LSM8 and LSM7. Methylated by PMRT15/SKB1 in response to salt stress or abscisic acid (ABA) treatment. As to expression, expressed in roots, leaves, stems, flowers and siliques.

Its subcellular location is the cytoplasm. It is found in the nucleus. In terms of biological role, component of LSM protein complexes, which are involved in RNA processing. Component of the cytoplasmic LSM1-LSM7 complex which is involved in mRNA degradation by promoting decapping and leading to accurate 5'-3' mRNA decay. The cytoplasmic LSM1-LSM7 complex regulates developmental gene expression by the decapping of specific development-related transcripts. Component of the nuclear LSM2-LSM8 complex which is involved splicing nuclear mRNAs. LSM2-LSM8 binds directly to the U6 small nuclear RNAs (snRNAs) and is essential for accurate splicing of selected development-related mRNAs through the stabilization of the spliceosomal U6 snRNA. Plays a critical role in the regulation of development-related gene expression. The chain is Sm-like protein LSM4 from Arabidopsis thaliana (Mouse-ear cress).